We begin with the raw amino-acid sequence, 472 residues long: Serralysin A (472 aa).

A propeptide spanning residues methionine 1–serine 17 is cleaved from the precursor. Histidine 186 is a binding site for Zn(2+). Glutamate 187 is an active-site residue. Zn(2+)-binding residues include histidine 190 and tyrosine 221. Positions 258, 260, 262, 290, 292, 293, 332, 334, 339, 341, 343, 348, 350, 352, 356, 357, 358, 359, 361, 365, 366, 367, 368, 370, 374, 375, 377, 379, 388, 395, and 405 each coordinate Ca(2+). 2 Hemolysin-type calcium-binding repeats span residues isoleucine 337 to leucine 354 and arginine 355 to leucine 372.

Belongs to the peptidase M10B family. The cofactor is Ca(2+). Requires Zn(2+) as cofactor.

It is found in the secreted. The enzyme catalyses Preferential cleavage of bonds with hydrophobic residues in P1'.. The chain is Serralysin A (prtA) from Dickeya chrysanthemi (Pectobacterium chrysanthemi).